Reading from the N-terminus, the 456-residue chain is MERTCLAIILAAGESTRMKSAMSKVLHPVAGRAMISHVVDALASASISDVALVVGRDAEAVAAAANTGDVAVTALLQKERLGTAHAVLAAREAIAKGYDDILVVFGDTPLITAAPLEAARDGLAAGNDVVVIGFQAADPTGYGRLIVEGDALVAIREHRDASEEERRITYCNGGLMAIDGRKALDLLDRVGNTNAKGEYYLTDLVEIVRSLGGRAIAVEAPEEELTGCNTRAELAYIERLWQQRRRHELMLAGVSMVAPETVFLSWDTALAQDVLVEPNVVFGPGVRVESGAIIHAFSHLEGAHVRAGAAVGPFARLRTGADLGANSKVGNFCEVKKAEIGAGAKVSHLTYIGDAFVGAGTNIGAGTITCNYDGVNKHVTRIGANAFIGSNSALVAPVSIGDGALIASGSVITEDVPADAVAFGRARQEVKPGRAPILRERYKAEKLARKIAKAAE.

The tract at residues 1–231 is pyrophosphorylase; the sequence is MERTCLAIIL…EEELTGCNTR (231 aa). UDP-N-acetyl-alpha-D-glucosamine contacts are provided by residues 10–13, lysine 24, glutamine 77, and 82–83; these read LAAG and GT. Aspartate 107 serves as a coordination point for Mg(2+). UDP-N-acetyl-alpha-D-glucosamine contacts are provided by glycine 143, glutamate 157, asparagine 172, and asparagine 229. Asparagine 229 provides a ligand contact to Mg(2+). Residues 232–252 are linker; that stretch reads AELAYIERLWQQRRRHELMLA. The tract at residues 253–456 is N-acetyltransferase; it reads GVSMVAPETV…LARKIAKAAE (204 aa). UDP-N-acetyl-alpha-D-glucosamine is bound by residues arginine 318 and lysine 336. The active-site Proton acceptor is histidine 348. Residues tyrosine 351 and asparagine 362 each contribute to the UDP-N-acetyl-alpha-D-glucosamine site. Residues alanine 365, 371–372, serine 390, serine 408, and arginine 425 each bind acetyl-CoA; that span reads NY.

The protein in the N-terminal section; belongs to the N-acetylglucosamine-1-phosphate uridyltransferase family. This sequence in the C-terminal section; belongs to the transferase hexapeptide repeat family. Homotrimer. The cofactor is Mg(2+).

It localises to the cytoplasm. The enzyme catalyses alpha-D-glucosamine 1-phosphate + acetyl-CoA = N-acetyl-alpha-D-glucosamine 1-phosphate + CoA + H(+). It catalyses the reaction N-acetyl-alpha-D-glucosamine 1-phosphate + UTP + H(+) = UDP-N-acetyl-alpha-D-glucosamine + diphosphate. The protein operates within nucleotide-sugar biosynthesis; UDP-N-acetyl-alpha-D-glucosamine biosynthesis; N-acetyl-alpha-D-glucosamine 1-phosphate from alpha-D-glucosamine 6-phosphate (route II): step 2/2. It participates in nucleotide-sugar biosynthesis; UDP-N-acetyl-alpha-D-glucosamine biosynthesis; UDP-N-acetyl-alpha-D-glucosamine from N-acetyl-alpha-D-glucosamine 1-phosphate: step 1/1. Its pathway is bacterial outer membrane biogenesis; LPS lipid A biosynthesis. In terms of biological role, catalyzes the last two sequential reactions in the de novo biosynthetic pathway for UDP-N-acetylglucosamine (UDP-GlcNAc). The C-terminal domain catalyzes the transfer of acetyl group from acetyl coenzyme A to glucosamine-1-phosphate (GlcN-1-P) to produce N-acetylglucosamine-1-phosphate (GlcNAc-1-P), which is converted into UDP-GlcNAc by the transfer of uridine 5-monophosphate (from uridine 5-triphosphate), a reaction catalyzed by the N-terminal domain. This chain is Bifunctional protein GlmU, found in Sinorhizobium medicae (strain WSM419) (Ensifer medicae).